Here is a 326-residue protein sequence, read N- to C-terminus: Thiamine thiazole synthase (326 aa).

Substrate-binding positions include Cys87, 108–109, Gly116, and Val181; that span reads EA. Cys215 carries the 2,3-didehydroalanine (Cys) modification. Substrate-binding positions include Asp217, His232, Met284, and 294 to 296; that span reads RMG.

Belongs to the THI4 family. As to quaternary structure, homooctamer. It depends on Fe cation as a cofactor. Post-translationally, during the catalytic reaction, a sulfide is transferred from Cys-215 to a reaction intermediate, generating a dehydroalanine residue.

It localises to the cytoplasm. Its subcellular location is the nucleus. It carries out the reaction [ADP-thiazole synthase]-L-cysteine + glycine + NAD(+) = [ADP-thiazole synthase]-dehydroalanine + ADP-5-ethyl-4-methylthiazole-2-carboxylate + nicotinamide + 3 H2O + 2 H(+). Its function is as follows. Involved in biosynthesis of the thiamine precursor thiazole. Catalyzes the conversion of NAD and glycine to adenosine diphosphate 5-(2-hydroxyethyl)-4-methylthiazole-2-carboxylic acid (ADT), an adenylated thiazole intermediate. The reaction includes an iron-dependent sulfide transfer from a conserved cysteine residue of the protein to a thiazole intermediate. The enzyme can only undergo a single turnover, which suggests it is a suicide enzyme. May have additional roles in adaptation to various stress conditions and in DNA damage tolerance. This chain is Thiamine thiazole synthase, found in Sclerotinia sclerotiorum (strain ATCC 18683 / 1980 / Ss-1) (White mold).